We begin with the raw amino-acid sequence, 347 residues long: Extracellular exo-alpha-(1-&gt;5)-L-arabinofuranosidase ArbA (347 aa).

The signal sequence occupies residues 1–31; the sequence is MPTHHPITRQHWHHSWLSALALLCASLACGA. Residue Asp35 participates in substrate binding. Catalysis depends on Asp38, which acts as the Proton acceptor. Substrate-binding positions include 90–92, 115–116, Asn155, Ser175, and Glu221; these read DGH and GK. The active-site Proton donor is the Glu221. His291 lines the Ca(2+) pocket. Residue Gln316 participates in substrate binding.

Belongs to the glycosyl hydrolase 43 family. Homodimer.

It is found in the secreted. It catalyses the reaction Hydrolysis of terminal non-reducing alpha-L-arabinofuranoside residues in alpha-L-arabinosides.. The protein operates within glycan metabolism; L-arabinan degradation. Its function is as follows. Involved in the degradation of arabinan and is a key enzyme in the complete degradation of the plant cell wall. Catalyzes the cleavage of the terminal alpha-(1-&gt;5)-arabinofuranosyl bonds of linear arabinan and carboxymethylarabinan to produce almost exclusively arabinotriose. The sequence is that of Extracellular exo-alpha-(1-&gt;5)-L-arabinofuranosidase ArbA (arbA) from Cellvibrio japonicus (strain Ueda107) (Pseudomonas fluorescens subsp. cellulosa).